Here is a 649-residue protein sequence, read N- to C-terminus: 1-deoxy-D-xylulose-5-phosphate synthase (649 aa).

Residues histidine 84 and 125–127 (GHS) contribute to the thiamine diphosphate site. Aspartate 156 contacts Mg(2+). Thiamine diphosphate contacts are provided by residues 157-158 (GS), asparagine 185, phenylalanine 292, and glutamate 385. Asparagine 185 provides a ligand contact to Mg(2+).

The protein belongs to the transketolase family. DXPS subfamily. In terms of assembly, homodimer. Requires Mg(2+) as cofactor. Thiamine diphosphate is required as a cofactor.

It carries out the reaction D-glyceraldehyde 3-phosphate + pyruvate + H(+) = 1-deoxy-D-xylulose 5-phosphate + CO2. It functions in the pathway metabolic intermediate biosynthesis; 1-deoxy-D-xylulose 5-phosphate biosynthesis; 1-deoxy-D-xylulose 5-phosphate from D-glyceraldehyde 3-phosphate and pyruvate: step 1/1. In terms of biological role, catalyzes the acyloin condensation reaction between C atoms 2 and 3 of pyruvate and glyceraldehyde 3-phosphate to yield 1-deoxy-D-xylulose-5-phosphate (DXP). The polypeptide is 1-deoxy-D-xylulose-5-phosphate synthase (Saccharophagus degradans (strain 2-40 / ATCC 43961 / DSM 17024)).